The following is a 334-amino-acid chain: Cytoplasmic envelopment protein 2 (334 aa).

Belongs to the herpesviridae cytoplasmic envelopment protein 2 family. Interacts with cytoplasmic envelopment protein 3 and with the capsid.

It is found in the virion tegument. It localises to the host cytoplasm. The protein resides in the host nucleus. Plays a critical role in cytoplasmic virus egress. Participates in the final step of tegumentation and envelope acquisition within the host cytoplasm by directly interacting with the capsid. Upon virion binding to target cell, a signaling cascade is triggered to disrupt the interaction with the capsid, thereby preparing capsid uncoating. In Homo sapiens (Human), this protein is Cytoplasmic envelopment protein 2 (ORF33).